Here is a 105-residue protein sequence, read N- to C-terminus: UPF0145 protein HD_1349 (105 aa).

The protein belongs to the UPF0145 family.

The polypeptide is UPF0145 protein HD_1349 (Haemophilus ducreyi (strain 35000HP / ATCC 700724)).